A 273-amino-acid polypeptide reads, in one-letter code: Dermonecrotic toxin LdSicTox-alphaIB1aii (273 aa).

His-5 is a catalytic residue. Mg(2+) is bound by residues Glu-25 and Asp-27. The active-site Nucleophile is the His-41. 2 disulfide bridges follow: Cys-45–Cys-51 and Cys-47–Cys-190. Asp-85 contributes to the Mg(2+) binding site. Asn-250 carries an N-linked (GlcNAc...) asparagine glycan.

This sequence belongs to the arthropod phospholipase D family. Class II subfamily. Mg(2+) is required as a cofactor. Expressed by the venom gland.

Its subcellular location is the secreted. The enzyme catalyses an N-(acyl)-sphingosylphosphocholine = an N-(acyl)-sphingosyl-1,3-cyclic phosphate + choline. It catalyses the reaction an N-(acyl)-sphingosylphosphoethanolamine = an N-(acyl)-sphingosyl-1,3-cyclic phosphate + ethanolamine. It carries out the reaction a 1-acyl-sn-glycero-3-phosphocholine = a 1-acyl-sn-glycero-2,3-cyclic phosphate + choline. The catalysed reaction is a 1-acyl-sn-glycero-3-phosphoethanolamine = a 1-acyl-sn-glycero-2,3-cyclic phosphate + ethanolamine. Functionally, dermonecrotic toxins cleave the phosphodiester linkage between the phosphate and headgroup of certain phospholipids (sphingolipid and lysolipid substrates), forming an alcohol (often choline) and a cyclic phosphate. This toxin acts on sphingomyelin (SM). It may also act on ceramide phosphoethanolamine (CPE), lysophosphatidylcholine (LPC) and lysophosphatidylethanolamine (LPE), but not on lysophosphatidylserine (LPS), and lysophosphatidylglycerol (LPG). It acts by transphosphatidylation, releasing exclusively cyclic phosphate products as second products. Induces dermonecrosis, hemolysis, increased vascular permeability, edema, inflammatory response, and platelet aggregation. The polypeptide is Dermonecrotic toxin LdSicTox-alphaIB1aii (Loxosceles deserta (Desert recluse spider)).